A 94-amino-acid polypeptide reads, in one-letter code: Co-chaperonin GroES (94 aa).

It belongs to the GroES chaperonin family. As to quaternary structure, heptamer of 7 subunits arranged in a ring. Interacts with the chaperonin GroEL.

It localises to the cytoplasm. Together with the chaperonin GroEL, plays an essential role in assisting protein folding. The GroEL-GroES system forms a nano-cage that allows encapsulation of the non-native substrate proteins and provides a physical environment optimized to promote and accelerate protein folding. GroES binds to the apical surface of the GroEL ring, thereby capping the opening of the GroEL channel. This chain is Co-chaperonin GroES, found in Lactococcus lactis subsp. cremoris (strain MG1363).